The chain runs to 173 residues: Ribosomal RNA large subunit methyltransferase H (173 aa).

Leu-89 and Gly-121 together coordinate S-adenosyl-L-methionine.

The protein belongs to the RNA methyltransferase RlmH family. Homodimer.

It localises to the cytoplasm. The catalysed reaction is pseudouridine(1915) in 23S rRNA + S-adenosyl-L-methionine = N(3)-methylpseudouridine(1915) in 23S rRNA + S-adenosyl-L-homocysteine + H(+). Specifically methylates the pseudouridine at position 1915 (m3Psi1915) in 23S rRNA. The protein is Ribosomal RNA large subunit methyltransferase H of Chelativorans sp. (strain BNC1).